We begin with the raw amino-acid sequence, 396 residues long: Putative glycosyltransferase HOC1 (396 aa).

Over 2–13 (AKTTKRASSFRR) the chain is Cytoplasmic. The chain crosses the membrane as a helical; Signal-anchor for type II membrane protein span at residues 14–34 (LMIFAIIALISLAFGVRYLFH). At 35 to 396 (NSNATDLQKI…WKNTPKVEQK (362 aa)) the chain is on the lumenal side. N-linked (GlcNAc...) asparagine glycosylation occurs at N37.

It belongs to the glycosyltransferase 32 family. Component of the M-Pol II complex composed of ANP1, MNN9, MNN10, MNN11 and HOC1.

It is found in the golgi apparatus. The protein resides in the cis-Golgi network membrane. In terms of biological role, the M-Pol II complex possesses alpha-1,6-mannosyltransferase activity and is probably involved in the elongation of the mannan backbone of N-linked glycans on cell wall and periplasmic proteins. This is Putative glycosyltransferase HOC1 (HOC1) from Saccharomyces cerevisiae (strain ATCC 204508 / S288c) (Baker's yeast).